A 333-amino-acid polypeptide reads, in one-letter code: Large ribosomal subunit protein uL3 (333 aa).

The protein belongs to the universal ribosomal protein uL3 family. In terms of assembly, part of the 50S ribosomal subunit. Forms a cluster with proteins L14 and L24e.

Functionally, one of the primary rRNA binding proteins, it binds directly near the 3'-end of the 23S rRNA, where it nucleates assembly of the 50S subunit. In Methanocorpusculum labreanum (strain ATCC 43576 / DSM 4855 / Z), this protein is Large ribosomal subunit protein uL3.